A 464-amino-acid chain; its full sequence is tRNA(Ile)-lysidine synthase (464 aa).

30 to 35 contributes to the ATP binding site; that stretch reads SGGVDS.

This sequence belongs to the tRNA(Ile)-lysidine synthase family.

Its subcellular location is the cytoplasm. It carries out the reaction cytidine(34) in tRNA(Ile2) + L-lysine + ATP = lysidine(34) in tRNA(Ile2) + AMP + diphosphate + H(+). In terms of biological role, ligates lysine onto the cytidine present at position 34 of the AUA codon-specific tRNA(Ile) that contains the anticodon CAU, in an ATP-dependent manner. Cytidine is converted to lysidine, thus changing the amino acid specificity of the tRNA from methionine to isoleucine. The protein is tRNA(Ile)-lysidine synthase of Shewanella oneidensis (strain ATCC 700550 / JCM 31522 / CIP 106686 / LMG 19005 / NCIMB 14063 / MR-1).